The chain runs to 334 residues: MLGIMAWNATCKNWLAAEAALEKYYLSIFYGIEFVVGVLGNTIVVYGYIFSLKNWNSSNIYLFNLSVSDLAFLCTLPMLIRSYANGNWIYGDVLCISNRYVLHANLYTSILFLTFISIDRYLIIKYPFREHLLQKKEFAILISLAIWVLVTLELLPILPLINPVITDNGTTCNDFASSGDPNYNLIYSMCLTLLGFLIPLFVMCFFYYKIALFLKQRNRQVATALPLEKPLNLVIMAVVIFSVLFTPYHVMRNVRIASRLGSWKQYQCTQVVINSFYIVTRPLAFLNSVINPVFYFLLGDHFRDMLMNQLRHNFKSLTSFSRWAHELLLSFREK.

The Extracellular segment spans residues 5–31 (MAWNATCKNWLAAEAALEKYYLSIFYG). Residue N8 is glycosylated (N-linked (GlcNAc...) asparagine). A helical membrane pass occupies residues 32–52 (IEFVVGVLGNTIVVYGYIFSL). Topologically, residues 53-59 (KNWNSSN) are cytoplasmic. A helical transmembrane segment spans residues 60 to 80 (IYLFNLSVSDLAFLCTLPMLI). Residues 81–103 (RSYANGNWIYGDVLCISNRYVLH) lie on the Extracellular side of the membrane. Residues C95 and C172 are joined by a disulfide bond. A helical transmembrane segment spans residues 104–124 (ANLYTSILFLTFISIDRYLII). At 125 to 137 (KYPFREHLLQKKE) the chain is on the cytoplasmic side. The helical transmembrane segment at 138 to 158 (FAILISLAIWVLVTLELLPIL) threads the bilayer. Topologically, residues 159–185 (PLINPVITDNGTTCNDFASSGDPNYNL) are extracellular. N-linked (GlcNAc...) asparagine glycosylation occurs at N168. The helical transmembrane segment at 186–206 (IYSMCLTLLGFLIPLFVMCFF) threads the bilayer. Residues 207 to 230 (YYKIALFLKQRNRQVATALPLEKP) lie on the Cytoplasmic side of the membrane. A helical transmembrane segment spans residues 231–251 (LNLVIMAVVIFSVLFTPYHVM). The Extracellular segment spans residues 252–281 (RNVRIASRLGSWKQYQCTQVVINSFYIVTR). The helical transmembrane segment at 282-302 (PLAFLNSVINPVFYFLLGDHF) threads the bilayer. Residues 303 to 334 (RDMLMNQLRHNFKSLTSFSRWAHELLLSFREK) are Cytoplasmic-facing.

It belongs to the G-protein coupled receptor 1 family. In terms of tissue distribution, expressed specifically in kidney. Highly expressed in immature dendritic cells, expression rapidly downregulates after maturation. Also expressed in macrophages.

It localises to the cell membrane. G protein-coupled receptor for succinate able to mediate signaling through Gq/GNAQ or Gi/GNAI second messengers depending on the cell type and the processes regulated. Succinate-SUCNR1 signaling serves as a link between metabolic stress, inflammation and energy homeostasis. In macrophages, plays a range of immune-regulatory roles. During inflammation, succinate-SUCNR1 signaling may act as an anti-inflammatory mediator or boost inflammation depending on the inflammatory status of cells. Hyperpolarizes M2 macrophages versus M1 phenotype through Gq signaling by regulating the transcription of genes involved in immune function. In activated M1 macrophages, plays a pro-inflammatory role in response to LPS. Expressed in dendritic cells, where it is involved in the sensing of immunological danger and enhances immunity. Mediates succinate triggered intracelleular calcium mobilization, induces migratory responses and acts in synergy with Toll-like receptor ligands for the production of proinflammatory cytokines as well as an enhancement of antigen-specific activation of helper T cells. In the small intestine, mediates the activation of tuft cells by dietary succinate and triggers type 2 immunity. In adipocytes, plays an important role in the control of energy metabolism. In response to succinate, controls leptin expression in an AMPK-JNK-CEBPA-dependent as well as circadian clock-regulated manner. In muscle tissue, is expressed in non-muscle cells and coordinates muscle remodeling in response to the succinate produced during exercise training in a paracrine manner. In retina, acts as a mediator of vessel growth during retinal development. In response to succinate, regulates the production of angiogenic factors, including VEGF, by retinal ganglion neurons. In Homo sapiens (Human), this protein is Succinate receptor 1.